A 476-amino-acid polypeptide reads, in one-letter code: Protein transport protein Sec61 subunit alpha isoform B (476 aa).

Topologically, residues 2–33 are cytoplasmic; it reads GIKFLEVIKPFCAVLPEIQKPERKIQFREKVL. A helical transmembrane segment spans residues 34 to 53; that stretch reads WTAITLFIFLVCCQIPLFGI. The Lumenal portion of the chain corresponds to 54-76; the sequence is MSSDSADPFYWMRVILASNRGTL. The helical transmembrane segment at 77 to 96 threads the bilayer; that stretch reads MELGISPIVTSGLIMQLLAG. Residues 97 to 117 lie on the Cytoplasmic side of the membrane; it reads AKIIEVGDTPKDRALFNGAQK. The chain crosses the membrane as a helical span at residues 118–138; that stretch reads LFGMIITIGQAIVYVMTGMYG. Residues 139-144 are Lumenal-facing; the sequence is DPSDMG. A helical membrane pass occupies residues 145-165; the sequence is AGICLLIIIQLFVAGLIVLLL. The Cytoplasmic segment spans residues 166-172; the sequence is DELLQKG. A helical transmembrane segment spans residues 173 to 193; that stretch reads YGLGSGISLFIATNICETIVW. Residues 194–240 are Lumenal-facing; it reads KAFSPTTVNTGRGTEFEGAIIALFHLLATRTDKVRALREAFYRQNLP. A helical transmembrane segment spans residues 241–261; it reads NLMNLLATVFVFGVVIYFQGF. The Cytoplasmic segment spans residues 262 to 288; it reads RVDLPIKSARYRGQYNTYPIKLFYTSN. A helical transmembrane segment spans residues 289-309; the sequence is IPIILQSALVSNLYVISQMLS. The Lumenal segment spans residues 310 to 354; that stretch reads TRFSGNFLVNLLGTWSDTSSGGPARAYPVGGLCYYFSPPESFGSV. The helical transmembrane segment at 355–375 threads the bilayer; that stretch reads LDDPIHAAIYICFMLGSCAFF. The Cytoplasmic portion of the chain corresponds to 376–420; sequence SKTWIEVSGSSAKDVAKQLKEQQMVMRGHRETSMVHELNRYIPTA. A helical transmembrane segment spans residues 421–441; the sequence is AAFGGLCIGGLSVMADFLGAI. Over 442 to 445 the chain is Lumenal; sequence GSGT. A helical membrane pass occupies residues 446–462; the sequence is GILLAVTIIYQYFEIFV. Residues 463–476 are Cytoplasmic-facing; it reads KEQSEMGSMGALLF.

Belongs to the SecY/SEC61-alpha family. As to quaternary structure, the SEC61 channel-forming translocon complex consists of channel-forming core components SEC61A1, SEC61B and SEC61G and different auxiliary components such as SEC62 and SEC63.

It is found in the endoplasmic reticulum membrane. Component of SEC61 channel-forming translocon complex that mediates transport of signal peptide-containing precursor polypeptides across the endoplasmic reticulum (ER). Forms a ribosome receptor and a gated pore in the ER membrane, both functions required for cotranslational translocation of nascent polypeptides. The protein is Protein transport protein Sec61 subunit alpha isoform B (sec61ab) of Oncorhynchus mykiss (Rainbow trout).